Reading from the N-terminus, the 1129-residue chain is Egg-laying defective protein 27 (1129 aa).

Positions 1–11 are enriched in polar residues; it reads MSRFDSQCSSE. The interval 1-43 is disordered; sequence MSRFDSQCSSEDVNKEDECVPSSSEDSQDGVSSPMENDDEPEF. A compositionally biased stretch (low complexity) spans 22–33; sequence SSSEDSQDGVSS. In terms of domain architecture, BAH spans 87-223; that stretch reads TLYRLRDSVF…QDSTKLASTH (137 aa). The region spanning 224 to 327 is the ELM2 domain; that stretch reads YAIRVGTSFQ…DALSELNAND (104 aa). In terms of domain architecture, SANT spans 332–384; that stretch reads TDVDNMTQDDAKKFAKGIKQLGKNFSRIHRELLPHHSREQLVSYYYLWKKTPE. Positions 388 to 434 are disordered; sequence PKQAARRVNPTSIKRPTKEKVKASRPTSTEYLDFDSASESDVENNGP. Residues 419–429 show a composition bias toward acidic residues; it reads LDFDSASESDV. The GATA-type; atypical zinc-finger motif lies at 439–485; sequence CHHCYGAESKDWHHANGLLLCTDCRLHYKKYGQLRQIANRPSQVPAC. 5 disordered regions span residues 488-636, 693-717, 790-814, 899-950, and 982-1040; these read KRSN…DPMP, RDETNGETNSDLKDDENVEPDSPED, QQNQIKKEQQQSQPTPQQIHQQQAQ, MIAE…HAAA, and MAAQ…REHA. 2 stretches are compositionally biased toward polar residues: residues 525-545 and 561-573; these read PSTVSNGAPNLTAEETPTKKL and VINNVEKSNSSEE. Composition is skewed to acidic residues over residues 613–634 and 705–717; these read SYDDDDDEEEGKMTIDEGDDDP and KDDENVEPDSPED. Residues 899–914 are compositionally biased toward low complexity; it reads MIAEQQQQQRHAAAQQ. Over residues 915–932 the composition is skewed to basic and acidic residues; it reads LREREQREQRERERERQH. Low complexity-rich tracts occupy residues 933–950 and 983–999; these read QQQAQQALHQQQQQHAAA and AAQQQQQQQQAAQAQAQ. Basic and acidic residues predominate over residues 1000-1040; sequence RDQERERREREAREREAAREREREQAAREAAARDQAAREHA.

As to quaternary structure, interacts with ceh-6, sem-4 and sox-2. Interacts with wdr-5.1. As to expression, expression detected in anterior intestine and head region.

It is found in the nucleus. Functionally, transcription factor which promotes stress survival and delays aging. Required for cell cycle progression and development of the mesodermal and endodermal embryonic lineages. Required for normal T-cell polarity, for correct migration of QL neuroblast descendants and other cells, for embryonic patterning and for the embryonic expression of hlh-8. Also required for the transdifferentiation of the Y rectal epithelial cell to the PDA motor neuron during larval development. This chain is Egg-laying defective protein 27, found in Caenorhabditis elegans.